Reading from the N-terminus, the 479-residue chain is Poly(A) polymerase catalytic subunit (479 aa).

Active-site residues include Asp202 and Asp204. 3 residues coordinate Ca(2+): Asp202, Asp204, and Asp253.

The protein belongs to the poxviridae poly(A) polymerase catalytic subunit family. Heterodimer of a large (catalytic) subunit and a small (regulatory) subunit.

The catalysed reaction is RNA(n) + ATP = RNA(n)-3'-adenine ribonucleotide + diphosphate. Polymerase that creates the 3'-poly(A) tail of mRNA's. The polypeptide is Poly(A) polymerase catalytic subunit (OPG063) (Cowpox virus (strain GRI-90 / Grishak) (CPV)).